The primary structure comprises 445 residues: RING finger and transmembrane domain-containing protein 2 (445 aa).

Residues Met-1 to Lys-183 are Extracellular-facing. The interval Lys-12–Asp-41 is disordered. A helical membrane pass occupies residues Leu-184 to Leu-203. At Arg-204–Val-215 the chain is on the cytoplasmic side. Residues Leu-216 to Phe-236 form a helical membrane-spanning segment. The Extracellular portion of the chain corresponds to Ser-237–Asp-256. The chain crosses the membrane as a helical span at residues Phe-257–Ala-277. Over Leu-278 to Ser-330 the chain is Cytoplasmic. The helical transmembrane segment at Tyr-331 to Gly-351 threads the bilayer. At Arg-352–Tyr-445 the chain is on the extracellular side. The segment at Cys-385–Arg-423 adopts an RING-type zinc-finger fold.

It localises to the membrane. In terms of biological role, E3 ubiquitin-protein ligase that negatively regulates IL3-dependent cellular responses through IL3RA ubiquitination and degradation by the proteasome, having an anti-inflammatory effect. The chain is RING finger and transmembrane domain-containing protein 2 (Rnft2) from Mus musculus (Mouse).